The sequence spans 130 residues: Protein ApaG (130 aa).

In terms of domain architecture, ApaG spans 3–127; it reads RAVTRRIEVT…FSLDSPEGKR (125 aa).

In Rhodopseudomonas palustris (strain ATCC BAA-98 / CGA009), this protein is Protein ApaG.